A 217-amino-acid chain; its full sequence is Neuron-specific vesicular protein calcyon (217 aa).

Residues 1-25 (MVKLGCSFSGKPGKDPGDQDGAAMD) are disordered. Residues 1–87 (MVKLGCSFSG…EEGRRLPTAR (87 aa)) are Extracellular-facing. A glycan (N-linked (GlcNAc...) asparagine) is linked at asparagine 73. The chain crosses the membrane as a helical span at residues 88 to 108 (MIAFAMALLGCVLIMYKAIWY). Over 109-217 (DQFTCPDGFL…AGSAAPPPAQ (109 aa)) the chain is Cytoplasmic. Residues 162 to 217 (PAAWGDGYRAAKEERKGPTQAGAAAAATEPPGKPSAKAEKEAARKAAGSAAPPPAQ) are disordered.

It belongs to the NSG family. In terms of assembly, interacts with CLTA. In terms of processing, glycosylated. In terms of tissue distribution, expressed in the pyramidal cells of the prefrontal cortex, in hypothalamus and in caudate nucleus. No expression in spleen. Up-regulated in the prefrontal cortex of schizophrenic patients with nearly twice the levels of non-schizophrenics.

It localises to the cytoplasmic vesicle membrane. It is found in the cell membrane. Interacts with clathrin light chain A and stimulates clathrin self-assembly and clathrin-mediated endocytosis. The protein is Neuron-specific vesicular protein calcyon (CALY) of Homo sapiens (Human).